A 218-amino-acid polypeptide reads, in one-letter code: TPA-induced transmembrane protein homolog (218 aa).

The tract at residues 1–54 (MEEGSRSQSPREELELSMLDGPQEELTPLNNDLRIQPNSAEDPSPAQVGKESPW) is disordered. A helical transmembrane segment spans residues 66-86 (KLWMVIVTIFLCFIIVIVISL).

It is found in the endoplasmic reticulum membrane. This chain is TPA-induced transmembrane protein homolog, found in Mus musculus (Mouse).